Reading from the N-terminus, the 1035-residue chain is Valine--tRNA ligase (1035 aa).

Positions 45-55 match the 'HIGH' region motif; it reads PNVTGALHLGH. The stretch at 253–281 forms a coiled coil; it reads EKLSDANEKEAVDLNKQIEALQKRREERL. Lysine 619 serves as a coordination point for ATP. Residues 967-1035 adopt a coiled-coil conformation; it reads DVEAELARLE…QDILKLQSKK (69 aa).

The protein belongs to the class-I aminoacyl-tRNA synthetase family. ValS type 1 subfamily. In terms of assembly, monomer.

The protein resides in the cytoplasm. It carries out the reaction tRNA(Val) + L-valine + ATP = L-valyl-tRNA(Val) + AMP + diphosphate. Functionally, catalyzes the attachment of valine to tRNA(Val). As ValRS can inadvertently accommodate and process structurally similar amino acids such as threonine, to avoid such errors, it has a 'posttransfer' editing activity that hydrolyzes mischarged Thr-tRNA(Val) in a tRNA-dependent manner. This Rhodopirellula baltica (strain DSM 10527 / NCIMB 13988 / SH1) protein is Valine--tRNA ligase.